The sequence spans 776 residues: Protocadherin beta-16 (776 aa).

A signal peptide spans 1-28 (MEIGWMHNRRQRQVLVFFVLLSLSGAGA). The Extracellular portion of the chain corresponds to 29–690 (ELGSYSVVEE…TQANSLTVYL (662 aa)). Cadherin domains are found at residues 35–133 (VVEE…SPMF), 138–242 (MILK…APEF), 247–347 (YKVQ…PPQV), 352–451 (LTSP…APTF), and 456–561 (YTLF…SPFV). N-linked (GlcNAc...) asparagine glycosylation is found at asparagine 418 and asparagine 436. Asparagine 567 carries N-linked (GlcNAc...) asparagine glycosylation. The region spanning 568–671 (GSAPCTELVP…LVDGFSQPFL (104 aa)) is the Cadherin 6 domain. Residues 691-711 (VVALASVSSLFLFSVLLFVAV) form a helical membrane-spanning segment. At 712–776 (RLCRRSRAAS…LKPIIPNFSP (65 aa)) the chain is on the cytoplasmic side.

It is found in the membrane. Potential calcium-dependent cell-adhesion protein. May be involved in the establishment and maintenance of specific neuronal connections in the brain. The protein is Protocadherin beta-16 of Homo sapiens (Human).